An 88-amino-acid polypeptide reads, in one-letter code: Defensin-like protein 98 (88 aa).

A signal peptide spans 1–29 (MGSLRVSTVVIAVVACLSILLISPTEVDG). 4 disulfides stabilise this stretch: C33–C76, C40–C62, C46–C73, and C50–C75.

Belongs to the DEFL family.

The protein resides in the secreted. The polypeptide is Defensin-like protein 98 (Arabidopsis thaliana (Mouse-ear cress)).